Here is a 331-residue protein sequence, read N- to C-terminus: ADP,ATP carrier protein 1, mitochondrial (331 aa).

Solcar repeat units follow at residues 29–122, 134–226, and 238–320; these read KNFA…FKRM, KWFG…LKPV, and ASFA…LQIL. The next 5 helical transmembrane spans lie at 31–58, 99–123, 132–152, 202–223, and 237–257; these read FAID…VKLL, TANV…KRMF, YWKW…SSLF, FNIS…YDSL, and FASF…SYPI. Positions 104 and 116 each coordinate ADP. Residue R261 participates in ADP binding. An important for transport activity region spans residues 261 to 266; sequence RRRMMM. The Nucleotide carrier signature motif signature appears at 261-266; the sequence is RRRMMM. Residues 297–317 form a helical membrane-spanning segment; the sequence is AGANILRAIAGAGVLSGYDQL.

This sequence belongs to the mitochondrial carrier (TC 2.A.29) family. As to quaternary structure, monomer.

It is found in the mitochondrion inner membrane. It carries out the reaction ADP(in) + ATP(out) = ADP(out) + ATP(in). Its activity is regulated as follows. The matrix-open state (m-state) is inhibited by the membrane-permeable bongkrekic acid (BKA). The cytoplasmic-open state (c-state) is inhibited by the membrane-impermeable toxic inhibitor carboxyatractyloside (CATR). Functionally, ADP:ATP antiporter that mediates import of ADP into the mitochondrial matrix for ATP synthesis, and export of ATP out to fuel the cell. Cycles between the cytoplasmic-open state (c-state) and the matrix-open state (m-state): operates by the alternating access mechanism with a single substrate-binding site intermittently exposed to either the cytosolic (c-state) or matrix (m-state) side of the inner mitochondrial membrane. This chain is ADP,ATP carrier protein 1, mitochondrial (ANT-G1), found in Triticum aestivum (Wheat).